The following is a 383-amino-acid chain: Protein COS5 (383 aa).

Topologically, residues 1-42 are cytoplasmic; the sequence is MKENELKNEKSVDVLSFKQLESQKIVLPQDLFRSSFTWFCYE. Residues 43–63 form a helical membrane-spanning segment; sequence IYKSLAFPIWMLLWLPLSVWW. At 64–72 the chain is on the extracellular side; that stretch reads KLSNNCIYP. A helical membrane pass occupies residues 73-93; that stretch reads LIVSLLVLFLGPIFVLVICGL. The Cytoplasmic portion of the chain corresponds to 94–232; the sequence is SRKRSLSKQL…RSKLTWFLKR (139 aa). Residues 233–253 traverse the membrane as a helical segment; it reads IFTIYSLPLWLAFLNCICVSQ. Residue His254 is a topological domain, extracellular. The helical transmembrane segment at 255–275 threads the bilayer; that stretch reads FCLAFRILCPGLFFLMMVWLF. Residues 276–383 are Cytoplasmic-facing; sequence QNMRTTALLV…SRNEESLMKK (108 aa).

This sequence belongs to the DUP/COS family.

Its subcellular location is the membrane. This is Protein COS5 (COS5) from Saccharomyces cerevisiae (strain ATCC 204508 / S288c) (Baker's yeast).